The primary structure comprises 208 residues: 3-demethoxyubiquinol 3-hydroxylase (208 aa).

6 residues coordinate Fe cation: Glu57, Glu87, His90, Glu139, Glu171, and His174.

Belongs to the COQ7 family. Fe cation serves as cofactor.

It is found in the cell membrane. The catalysed reaction is a 5-methoxy-2-methyl-3-(all-trans-polyprenyl)benzene-1,4-diol + AH2 + O2 = a 3-demethylubiquinol + A + H2O. Its pathway is cofactor biosynthesis; ubiquinone biosynthesis. Functionally, catalyzes the hydroxylation of 2-nonaprenyl-3-methyl-6-methoxy-1,4-benzoquinol during ubiquinone biosynthesis. This chain is 3-demethoxyubiquinol 3-hydroxylase, found in Nitrosospira multiformis (strain ATCC 25196 / NCIMB 11849 / C 71).